The chain runs to 509 residues: Anaerobic nitric oxide reductase transcription regulator NorR (509 aa).

Position 56 is a 4-aspartylphosphate (Asp-56). A Sigma-54 factor interaction domain is found at Met-186–Val-415. ATP contacts are provided by residues Gly-214 to Glu-221 and Ala-277 to Glu-286. A DNA-binding region (H-T-H motif) is located at residues Trp-484–Arg-503.

Its pathway is nitrogen metabolism; nitric oxide reduction. Functionally, required for the expression of anaerobic nitric oxide (NO) reductase, acts as a transcriptional activator for at least the norVW operon. Activation also requires sigma-54. The protein is Anaerobic nitric oxide reductase transcription regulator NorR of Aeromonas salmonicida (strain A449).